Reading from the N-terminus, the 282-residue chain is Nicotianamine synthase-like 5 protein (282 aa).

It belongs to the nicotianamine synthase (NAS)-like family.

This chain is Nicotianamine synthase-like 5 protein (NAS5), found in Hordeum vulgare (Barley).